We begin with the raw amino-acid sequence, 556 residues long: Optineurin (556 aa).

The segment at 1-33 (MSSKPQIRPAENGEHCRSKMENGMDSMAPPTLS) is disordered. Over residues 11 to 22 (ENGEHCRSKMEN) the composition is skewed to basic and acidic residues. Positions 38–164 (EEMVQQMKEL…SELQVKLNIA (127 aa)) form a coiled coil. The LIR motif lies at 168–173 (DSFVEI). Residues 219 to 487 (VSQLLCCLRN…LLKEQQNLED (269 aa)) are a coiled coil. Residues 245–274 (ERLSKMENETSNCLESGTQTNQEEESSEAI) form a disordered region. Polar residues predominate over residues 253–265 (ETSNCLESGTQTN). Residues 453–458 (DFHAER) carry the UBAN motif. The segment at 496–524 (MQNRHGARAPDREHSPRLVQRGTGSQEWP) is disordered. The CCHC NOA-type zinc-finger motif lies at 526–556 (QRNISIYSCPKCEEILPDLDTLQIHVMDCIN). Zn(2+)-binding residues include cysteine 534, cysteine 537, histidine 550, and cysteine 554.

In terms of assembly, binds to linear ubiquitin chains. Interacts with LC3 family members. As to expression, expressed in erythrocytes, skeletal muscle, heart, spleen and brain. Weakly expressed in lung and liver (at protein level).

It is found in the cytoplasm. The protein resides in the perinuclear region. The protein localises to the golgi apparatus. Its subcellular location is the trans-Golgi network. It localises to the cytoplasmic vesicle. It is found in the recycling endosome. The protein resides in the autophagosome. Functionally, probably part of the TNF-alpha signaling pathway that can shift the equilibrium toward induction of cell death. May act by regulating membrane trafficking and cellular morphogenesis. May act as autophagy receptor that interacts directly with both the cargo to become degraded and an autophagy modifier of the MAP1 LC3 family. This chain is Optineurin (OPTN), found in Gallus gallus (Chicken).